The sequence spans 365 residues: Uroporphyrinogen decarboxylase (365 aa).

Residues Met-1–Ser-17 are compositionally biased toward polar residues. Residues Met-1 to Ala-20 are disordered. Residues Arg-48–Arg-52, Asp-97, Tyr-172, Ser-227, and His-341 each bind substrate.

The protein belongs to the uroporphyrinogen decarboxylase family. As to quaternary structure, homodimer.

It localises to the cytoplasm. It carries out the reaction uroporphyrinogen III + 4 H(+) = coproporphyrinogen III + 4 CO2. Its pathway is porphyrin-containing compound metabolism; protoporphyrin-IX biosynthesis; coproporphyrinogen-III from 5-aminolevulinate: step 4/4. In terms of biological role, catalyzes the decarboxylation of four acetate groups of uroporphyrinogen-III to yield coproporphyrinogen-III. This Streptomyces griseus subsp. griseus (strain JCM 4626 / CBS 651.72 / NBRC 13350 / KCC S-0626 / ISP 5235) protein is Uroporphyrinogen decarboxylase.